Here is an 877-residue protein sequence, read N- to C-terminus: DNA polymerase I (877 aa).

Positions 180-270 constitute a 5'-3' exonuclease domain; the sequence is TPAQFIDLKA…EIGLDDTLLK (91 aa). A 3'-5' exonuclease domain is found at 308-468; it reads DEIDFEIVTD…AKEKMMAELL (161 aa).

It belongs to the DNA polymerase type-A family. In terms of assembly, single-chain monomer with multiple functions.

The enzyme catalyses DNA(n) + a 2'-deoxyribonucleoside 5'-triphosphate = DNA(n+1) + diphosphate. In terms of biological role, in addition to polymerase activity, this DNA polymerase exhibits 3'-5' and 5'-3' exonuclease activity. The protein is DNA polymerase I (polA) of Lactococcus lactis subsp. lactis (strain IL1403) (Streptococcus lactis).